The following is a 177-amino-acid chain: Small ribosomal subunit protein uS5 (177 aa).

An S5 DRBM domain is found at 19–82 (WQERVVQIRR…ADGKKQLVEV (64 aa)).

This sequence belongs to the universal ribosomal protein uS5 family. Part of the 30S ribosomal subunit. Contacts proteins S4 and S8.

Its function is as follows. With S4 and S12 plays an important role in translational accuracy. In terms of biological role, located at the back of the 30S subunit body where it stabilizes the conformation of the head with respect to the body. The chain is Small ribosomal subunit protein uS5 from Acaryochloris marina (strain MBIC 11017).